The sequence spans 160 residues: Large ribosomal subunit protein uL10 (160 aa).

The protein belongs to the universal ribosomal protein uL10 family. In terms of assembly, part of the ribosomal stalk of the 50S ribosomal subunit. The N-terminus interacts with L11 and the large rRNA to form the base of the stalk. The C-terminus forms an elongated spine to which L12 dimers bind in a sequential fashion forming a multimeric L10(L12)X complex.

Forms part of the ribosomal stalk, playing a central role in the interaction of the ribosome with GTP-bound translation factors. The polypeptide is Large ribosomal subunit protein uL10 (Wolinella succinogenes (strain ATCC 29543 / DSM 1740 / CCUG 13145 / JCM 31913 / LMG 7466 / NCTC 11488 / FDC 602W) (Vibrio succinogenes)).